The sequence spans 564 residues: Dihydroxy-acid dehydratase (564 aa).

Cys55 lines the [2Fe-2S] cluster pocket. Asp87 is a binding site for Mg(2+). Cys128 contributes to the [2Fe-2S] cluster binding site. Positions 129 and 130 each coordinate Mg(2+). Lys130 carries the post-translational modification N6-carboxylysine. Cys200 is a [2Fe-2S] cluster binding site. Residue Glu452 participates in Mg(2+) binding. Residue Ser478 is the Proton acceptor of the active site.

Belongs to the IlvD/Edd family. In terms of assembly, homodimer. The cofactor is [2Fe-2S] cluster. It depends on Mg(2+) as a cofactor.

The enzyme catalyses (2R)-2,3-dihydroxy-3-methylbutanoate = 3-methyl-2-oxobutanoate + H2O. The catalysed reaction is (2R,3R)-2,3-dihydroxy-3-methylpentanoate = (S)-3-methyl-2-oxopentanoate + H2O. Its pathway is amino-acid biosynthesis; L-isoleucine biosynthesis; L-isoleucine from 2-oxobutanoate: step 3/4. The protein operates within amino-acid biosynthesis; L-valine biosynthesis; L-valine from pyruvate: step 3/4. Its function is as follows. Functions in the biosynthesis of branched-chain amino acids. Catalyzes the dehydration of (2R,3R)-2,3-dihydroxy-3-methylpentanoate (2,3-dihydroxy-3-methylvalerate) into 2-oxo-3-methylpentanoate (2-oxo-3-methylvalerate) and of (2R)-2,3-dihydroxy-3-methylbutanoate (2,3-dihydroxyisovalerate) into 2-oxo-3-methylbutanoate (2-oxoisovalerate), the penultimate precursor to L-isoleucine and L-valine, respectively. The protein is Dihydroxy-acid dehydratase of Polaromonas sp. (strain JS666 / ATCC BAA-500).